The chain runs to 421 residues: Alpha-tubulin N-acetyltransferase 1 (421 aa).

Residues 1–190 (MEFPFDVDAL…NNFVIFEGFF (190 aa)) form the N-acetyltransferase domain. The residue at position 56 (lysine 56) is an N6-acetyllysine; by autocatalysis. 124–137 (FYIHESVQRHGHGR) provides a ligand contact to acetyl-CoA. Lysine 146 carries the N6-acetyllysine; by autocatalysis modification. 160 to 169 (SQKLLKFLNK) is an acetyl-CoA binding site. Residues 196 to 235 (PPAPSLRATRHSRAAAVDPTPAAPARKLPPKRAEGDIKPY) form a disordered region. The span at 209–221 (AAAVDPTPAAPAR) shows a compositional bias: low complexity. Positions 226–235 (KRAEGDIKPY) are enriched in basic and acidic residues. Residues lysine 233 and lysine 244 each carry the N6-acetyllysine; by autocatalysis modification. Residues 252-284 (PLNRAPRRATPPAHPPPRSSSLGNSPERGPLRP) form a disordered region. 2 positions are modified to phosphoserine: serine 272 and serine 276. An Asymmetric dimethylarginine modification is found at arginine 305. The segment at 306–402 (LLLAADPGGS…PAQSWTVGGD (97 aa)) is disordered. Residue serine 315 is modified to Phosphoserine. Residue arginine 323 is modified to Omega-N-methylarginine. A compositionally biased stretch (polar residues) spans 342 to 354 (VNSSSPNTGNQDS). Positions 355 to 367 (KQGEQETKNRSAS) are enriched in basic and acidic residues.

It belongs to the acetyltransferase ATAT1 family. In terms of assembly, component of the BBSome complex. Interacts with AP2 alpha-adaptins, including AP2A2, but not with AP1 gamma-adaptin (AP1G1/AP1G2); this interaction is required for efficient alpha-tubulin acetylation, hence clathrin-coated pits are sites of microtubule acetylation. Post-translationally, autoacetylation strongly increases tubulin acetylation.

The protein resides in the cytoplasm. The protein localises to the membrane. It localises to the clathrin-coated pit. It is found in the cell junction. Its subcellular location is the focal adhesion. The protein resides in the cell projection. The protein localises to the axon. It localises to the cytoskeleton. It is found in the spindle. It catalyses the reaction L-lysyl-[alpha-tubulin] + acetyl-CoA = N(6)-acetyl-L-lysyl-[alpha-tubulin] + CoA + H(+). Specifically acetylates 'Lys-40' in alpha-tubulin on the lumenal side of microtubules. Promotes microtubule destabilization and accelerates microtubule dynamics; this activity may be independent of acetylation activity. Acetylates alpha-tubulin with a slow enzymatic rate, due to a catalytic site that is not optimized for acetyl transfer. Enters the microtubule through each end and diffuses quickly throughout the lumen of microtubules. Acetylates only long/old microtubules because of its slow acetylation rate since it does not have time to act on dynamically unstable microtubules before the enzyme is released. Required for normal sperm flagellar function. Promotes directional cell locomotion and chemotaxis, through AP2A2-dependent acetylation of alpha-tubulin at clathrin-coated pits that are concentrated at the leading edge of migrating cells. May facilitate primary cilium assembly. In Homo sapiens (Human), this protein is Alpha-tubulin N-acetyltransferase 1.